Reading from the N-terminus, the 175-residue chain is Probable coatomer subunit zeta-A (175 aa).

The protein belongs to the adaptor complexes small subunit family. In terms of assembly, oligomeric complex that consists of at least the alpha, beta, beta', gamma, delta, epsilon and zeta subunits.

It is found in the cytoplasm. The protein resides in the golgi apparatus membrane. The protein localises to the cytoplasmic vesicle. It localises to the COPI-coated vesicle membrane. In terms of biological role, the coatomer is a cytosolic protein complex that binds to dilysine motifs and reversibly associates with Golgi non-clathrin-coated vesicles, which further mediate biosynthetic protein transport from the ER, via the Golgi up to the trans Golgi network. Coatomer complex is required for budding from Golgi membranes, and is essential for the retrograde Golgi-to-ER transport of dilysine-tagged proteins. The zeta subunit may be involved in regulating the coat assembly and, hence, the rate of biosynthetic protein transport due to its association-dissociation properties with the coatomer complex. This Dictyostelium discoideum (Social amoeba) protein is Probable coatomer subunit zeta-A (copZa).